The chain runs to 533 residues: Tryptophan 7-halogenase KtzQ (533 aa).

Positions 14, 16, 17, 40, 50, and 51 each coordinate FAD. K80 is a catalytic residue. L-tryptophan is bound at residue E359. Chloride contacts are provided by T361 and G362. L363 is an FAD binding site. Residues Y456, Y457, E463, and F467 each contribute to the L-tryptophan site.

This sequence belongs to the flavin-dependent halogenase family. Bacterial tryptophan halogenase subfamily.

It catalyses the reaction L-tryptophan + FADH2 + chloride + O2 = 7-chloro-L-tryptophan + FAD + 2 H2O. Functionally, involved in the biosynthesis of kutznerides, actinomycete-derived antifungal and antimicrobial cyclic hexadepsipeptides. Together with KtzR, catalyzes the regiospecific dichlorination of L-tryptophan (L-Trp) to produce 6,7-dichloro-L-tryptophan. KtzQ catalyzes the chlorination of L-Trp at C7 position to yield 7-chlorotryptophan. Can also use 6-chloro-L-tryptophan as substrate and form 6,7-dichloro-L-tryptophan, but has a preference for halogenation at the 7 position of unmodified L-Trp. Cannot use piperazic acid or gamma,delta-dehydropiperazic acid. This is Tryptophan 7-halogenase KtzQ from Kutzneria sp. (strain 744).